The sequence spans 433 residues: Myricetin 3-O-glucosyl 1,2-rhamnoside 6'-O-caffeoyltransferase AT1 (433 aa).

Catalysis depends on proton acceptor residues histidine 157 and aspartate 375.

The protein belongs to the plant acyltransferase family. Expressed in young cromes.

The enzyme catalyses myricetin 3-O-[beta-D-glucosyl-(1-&gt;2)-alpha-L-rhamnoside] + (E)-caffeoyl-CoA = myricetin 3-O-[(6-O-(E)-caffeoyl-beta-D-glucosyl)-(1-&gt;2)-alpha-L-rhamnoside] + CoA. Its pathway is flavonoid metabolism. Functionally, caffeoyltransferase involved in montbretin A (MbA) biosynthesis. Catalyzes the caffeoylation of myricetin 3-O-beta-D-glucosyl 1,2-alpha-L-rhamnoside (MRG) to produce myricetin 3-O-(6'-O-caffeoyl)-beta-D-glucosyl 1,2-alpha-L-rhamnoside (mini-MbA), a precursor of MbA. Mini-MbA and MbA are potent inhibitors of human pancreatic alpha-amylase and are being developed as drug candidates to treat type-2 diabetes. In vitro, is able to catalyze the caffeoylation of quercetin 3-O-sophoroside (QGG), although QGG may not be a physiological substrate in vivo. In vitro, can use coumaryl-CoA, feruloyl-CoA and acetyl-CoA, although these three acyl donors may not be physiological in vivo. The chain is Myricetin 3-O-glucosyl 1,2-rhamnoside 6'-O-caffeoyltransferase AT1 from Crocosmia x crocosmiiflora (Montbretia).